The primary structure comprises 356 residues: Epoxide hydrolase B (356 aa).

The region spanning 28–129 (PLVVLLHGFP…RCAGVVGISV (102 aa)) is the AB hydrolase-1 domain. Asp-104 acts as the Nucleophile in catalysis. His-333 (proton acceptor) is an active-site residue.

This sequence belongs to the AB hydrolase superfamily. Epoxide hydrolase family. Homodimer.

It catalyses the reaction an epoxide + H2O = an ethanediol. Its function is as follows. Could be involved in detoxification of extraneous host-cell epoxides. Catalyzes the hydrolysis of small aromatic epoxide-containing substrates such as trans-1,3-diphenylpropene oxide, trans and cis-stilbene oxide, and terpenoid epoxide. This chain is Epoxide hydrolase B, found in Mycobacterium tuberculosis (strain CDC 1551 / Oshkosh).